Here is a 618-residue protein sequence, read N- to C-terminus: Matrix metalloproteinase-24 (618 aa).

The N-terminal stretch at 1-41 is a signal peptide; that stretch reads MPRSRGGRAAPGQAARWSGWRAPGRLLPLLPALCCLAAAAG. The propeptide occupies 42-128; sequence AGKPAGADAP…HLSRRRRNKR (87 aa). The Extracellular segment spans residues 42 to 575; it reads AGKPAGADAP…IDDVPGSVNA (534 aa). The Cysteine switch signature appears at 110–117; it reads PRCGVPDH. Residues Cys112 and His255 each contribute to the Zn(2+) site. The active site involves Glu256. The Zn(2+) site is built by His259 and His265. The interval 296 to 352 is disordered; sequence QKIYGPPAEPLEPTRPLPTLPVRRIHSPSERKHERQPRPPRPPLGDRPSTPGAKPNI. A compositionally biased stretch (pro residues) spans 302-314; sequence PAEPLEPTRPLPT. Positions 322 to 332 are enriched in basic and acidic residues; sequence SPSERKHERQP. Hemopexin repeat units lie at residues 350–398, 399–444, 446–494, and 495–542; these read PNIC…WKGL, PARI…GSCL, REGI…KGIP, and QAPQ…WMGC. The cysteines at positions 353 and 542 are disulfide-linked. The helical transmembrane segment at 576–596 threads the bilayer; it reads VAVVVPCTLSLCLLVLLYTIF. Residues 597–618 are Cytoplasmic-facing; the sequence is QFKNKTGPQPVTYYKRPVQEWV. A PDZ-binding motif is present at residues 616 to 618; the sequence is EWV.

The protein belongs to the peptidase M10A family. Interacts (via PDZ-binding motif) with APBA3 (via PDZ domain). Interacts with GRIP1 and GRIP2. It depends on Zn(2+) as a cofactor. The cofactor is Ca(2+). In terms of processing, cleaved by a furin endopeptidase in the trans-Golgi network. In terms of tissue distribution, predominantly expressed in the nervous system: while enriched in the central nervous system, expression is also detected in the peripheral nervous system, including the trigeminal ganglion. Expression is not restricted to the nervous system: it is also enriched in the thymus, with a lower level of expression present in the aorta. In brain, high expression is present in the brain parenchyma, particularly within the neocortex.

The protein resides in the cell membrane. It is found in the golgi apparatus. It localises to the trans-Golgi network membrane. The protein localises to the secreted. Its subcellular location is the extracellular space. The protein resides in the extracellular matrix. In terms of biological role, metalloprotease that mediates cleavage of N-cadherin (CDH2) and acts as a regulator of neuro-immune interactions and neural stem cell quiescence. Involved in cell-cell interactions between nociceptive neurites and mast cells, possibly by mediating cleavage of CDH2, thereby acting as a mediator of peripheral thermal nociception and inflammatory hyperalgesia. Key regulator of neural stem cells quiescence by mediating cleavage of CDH2, affecting CDH2-mediated anchorage of neural stem cells to ependymocytes in the adult subependymal zone, leading to modulate their quiescence. May play a role in axonal growth. Able to activate progelatinase A. May also be a proteoglycanase involved in degradation of proteoglycans, such as dermatan sulfate and chondroitin sulfate proteoglycans. Cleaves partially fibronectin, but not collagen type I, nor laminin. The sequence is that of Matrix metalloproteinase-24 (Mmp24) from Rattus norvegicus (Rat).